The chain runs to 421 residues: Testin (421 aa).

The 108-residue stretch at 92 to 199 (MILTNPVAAK…GDVKLPRDMN (108 aa)) folds into the PET domain. 2 disordered regions span residues 133–164 (EKQP…PSKC) and 193–213 (KLPR…GGDR). The segment covering 155-164 (PAHDQDPSKC) has biased composition (basic and acidic residues). LIM zinc-binding domains lie at 234 to 297 (YSCY…CDSE), 299 to 359 (PRCA…NHAV), and 362 to 421 (QGCH…KMMS).

Belongs to the prickle / espinas / testin family. Interacts via LIM domain 1 with ZYX. Interacts (via LIM domain 3) with ENAH and VASP. Interacts with ALKBH4, talin, actin, alpha-actinin, GRIP1 and PXN. Interacts (via LIM domain 2) with ACTL7A (via N-terminus). Heterodimer with ACTL7A; the heterodimer interacts with ENAH to form a heterotrimer.

It localises to the cytoplasm. The protein localises to the cell junction. The protein resides in the focal adhesion. Scaffold protein that may play a role in cell adhesion, cell spreading and in the reorganization of the actin cytoskeleton. Plays a role in the regulation of cell proliferation. May act as a tumor suppressor. The polypeptide is Testin (TES) (Ovis aries (Sheep)).